We begin with the raw amino-acid sequence, 145 residues long: MAERPEDLNLPNAVITRIIKEALPDGVNISKEARSAISRAASVFVLYATSCANNFAMKGKRKTLNASDVLSAMEEMEFQRFVTPLKEALEAYRREQKGKKEASEQKKKDKDKKDCEEQDKSREEEDEDEERLDEEEQNEEEEVDN.

Ala2 carries the N-acetylalanine modification. The residue at position 83 (Thr83) is a Phosphothreonine. The stretch at 85–144 (LKEALEAYRREQKGKKEASEQKKKDKDKKDCEEQDKSREEEDEDEERLDEEEQNEEEEVD) forms a coiled coil. The span at 93 to 123 (RREQKGKKEASEQKKKDKDKKDCEEQDKSRE) shows a compositional bias: basic and acidic residues. Residues 93–145 (RREQKGKKEASEQKKKDKDKKDCEEQDKSREEEDEDEERLDEEEQNEEEEVDN) are disordered. The residue at position 121 (Ser121) is a Phosphoserine. The span at 124-145 (EEDEDEERLDEEEQNEEEEVDN) shows a compositional bias: acidic residues.

As to quaternary structure, component of the DNA polymerase epsilon complex consisting of four subunits: the catalytic subunit POLE and the accessory subunits POLE2, POLE3 and POLE4. Interaction with POLE4 is a prerequisite for further binding with POLE and POLE2. Heterodimer with CHRAC1; binds to DNA. Component of the CHRAC ISWI chromatin remodeling complex at least composed of SMARCA5/SNF2H, BAZ1A/ACF1, CHRAC1 and POLE3; the complex preferentially binds DNA through the CHRAC1-POLE3 heterodimer and possesses ATP-dependent nucleosome-remodeling activity. Within the complex, the heterodimer with CHRAC1 interacts with SMARCA5/SNF2H; the interaction is direct and enhances nucleosome sliding activity by the SMARCA5/SNF2H and BAZ1A/ACF1 interaction. Within the complex, the heterodimer with CHRAC1 interacts with BAZ1A/ACF1; the interactions are direct.

Its subcellular location is the nucleus. Functionally, accessory component of the DNA polymerase epsilon complex. Participates in DNA repair and in chromosomal DNA replication. Forms a complex with CHRAC1 and binds naked DNA, which is then incorporated into chromatin, aided by the nucleosome-remodeling activity of ISWI/SNF2H and ACF1. Does not enhance nucleosome sliding activity of the ACF-5 ISWI chromatin remodeling complex. In Rattus norvegicus (Rat), this protein is DNA polymerase epsilon subunit 3 (Pole3).